The following is a 144-amino-acid chain: Large ribosomal subunit protein uL13 (144 aa).

The protein belongs to the universal ribosomal protein uL13 family. As to quaternary structure, part of the 50S ribosomal subunit.

Functionally, this protein is one of the early assembly proteins of the 50S ribosomal subunit, although it is not seen to bind rRNA by itself. It is important during the early stages of 50S assembly. In Mycoplasmopsis pulmonis (strain UAB CTIP) (Mycoplasma pulmonis), this protein is Large ribosomal subunit protein uL13.